Reading from the N-terminus, the 255-residue chain is Small ribosomal subunit protein uS2 (255 aa).

This sequence belongs to the universal ribosomal protein uS2 family.

The sequence is that of Small ribosomal subunit protein uS2 from Streptococcus pyogenes serotype M3 (strain ATCC BAA-595 / MGAS315).